The sequence spans 70 residues: DNA-directed RNA polymerase subunit omega (70 aa).

Belongs to the RNA polymerase subunit omega family. As to quaternary structure, in cyanobacteria the RNAP catalytic core is composed of 2 alpha, 1 beta, 1 beta', 1 gamma and 1 omega subunit. When a sigma factor is associated with the core the holoenzyme is formed, which can initiate transcription.

The enzyme catalyses RNA(n) + a ribonucleoside 5'-triphosphate = RNA(n+1) + diphosphate. In terms of biological role, promotes RNA polymerase assembly. Latches the N- and C-terminal regions of the beta' subunit thereby facilitating its interaction with the beta and alpha subunits. The chain is DNA-directed RNA polymerase subunit omega from Prochlorococcus marinus (strain NATL1A).